A 294-amino-acid chain; its full sequence is HTH-type transcriptional regulator DgdR (294 aa).

One can recognise an HTH lysR-type domain in the interval Leu14–Leu70. A DNA-binding region (H-T-H motif) is located at residues Leu31–Lys50.

The protein belongs to the LysR transcriptional regulatory family.

In Burkholderia cepacia (Pseudomonas cepacia), this protein is HTH-type transcriptional regulator DgdR (dgdR).